A 322-amino-acid polypeptide reads, in one-letter code: Protein-methionine-sulfoxide reductase catalytic subunit MsrP (322 aa).

The segment at residues 1–59 is a signal peptide (tat-type signal); the sequence is MSFRDALNLPSSEITDESVYRDRRRLLQLLALTPALGVAGCAEADPPPPPKTVVTPAQA. Mo-molybdopterin contacts are provided by residues asparagine 79, 82–83, cysteine 137, threonine 172, asparagine 220, arginine 225, and 236–238; these read YE and SIK.

The protein belongs to the MsrP family. In terms of assembly, heterodimer of a catalytic subunit (MsrP) and a heme-binding subunit (MsrQ). The cofactor is Mo-molybdopterin. Post-translationally, predicted to be exported by the Tat system. The position of the signal peptide cleavage has not been experimentally proven.

Its subcellular location is the periplasm. The enzyme catalyses L-methionyl-[protein] + a quinone + H2O = L-methionyl-(S)-S-oxide-[protein] + a quinol. It carries out the reaction L-methionyl-[protein] + a quinone + H2O = L-methionyl-(R)-S-oxide-[protein] + a quinol. Part of the MsrPQ system that repairs oxidized periplasmic proteins containing methionine sulfoxide residues (Met-O), using respiratory chain electrons. Thus protects these proteins from oxidative-stress damage caused by reactive species of oxygen and chlorine generated by the host defense mechanisms. MsrPQ is essential for the maintenance of envelope integrity under bleach stress, rescuing a wide series of structurally unrelated periplasmic proteins from methionine oxidation. The catalytic subunit MsrP is non-stereospecific, being able to reduce both (R-) and (S-) diastereoisomers of methionine sulfoxide. In Xanthomonas axonopodis pv. citri (strain 306), this protein is Protein-methionine-sulfoxide reductase catalytic subunit MsrP.